Consider the following 110-residue polypeptide: UPF0060 membrane protein RPA3838 (110 aa).

Helical transmembrane passes span 4–24, 31–51, 59–79, and 85–105; these read LLTF…FWAW, PLWL…LTLA, AYAA…WAIE, and QWDV…LFGP.

The protein belongs to the UPF0060 family.

Its subcellular location is the cell inner membrane. In Rhodopseudomonas palustris (strain ATCC BAA-98 / CGA009), this protein is UPF0060 membrane protein RPA3838.